A 414-amino-acid polypeptide reads, in one-letter code: Probable serine/threonine-protein kinase CHK1 homolog (414 aa).

One can recognise a Protein kinase domain in the interval 4 to 255; it reads YELQETLASG…VSTVMKDPWV (252 aa). ATP-binding positions include 10–18 and Lys32; that span reads LASGSTSKV. Catalysis depends on Asp121, which acts as the Proton acceptor. The interval 291–310 is disordered; that stretch reads PGEVHKTPRTRPVSSQPRRA.

It belongs to the protein kinase superfamily. CAMK Ser/Thr protein kinase family. NIM1 subfamily.

It localises to the nucleus. It catalyses the reaction L-seryl-[protein] + ATP = O-phospho-L-seryl-[protein] + ADP + H(+). The enzyme catalyses L-threonyl-[protein] + ATP = O-phospho-L-threonyl-[protein] + ADP + H(+). Its function is as follows. Serine/threonine-protein kinase which is required for checkpoint-mediated cell cycle arrest and activation of DNA repair in response to the presence of DNA damage or unreplicated DNA. May also negatively regulate cell cycle progression during unperturbed cell cycles. In Encephalitozoon cuniculi (strain GB-M1) (Microsporidian parasite), this protein is Probable serine/threonine-protein kinase CHK1 homolog (CHK1).